We begin with the raw amino-acid sequence, 329 residues long: MSLNVKLHPSGIIFTSDGTSTILDAALDSNIHIEYSCKDGTCGSCKAILISGEVDSAENTFLTEEDVAKGAILTCCSKAKSDIELDVNYYPELSHIQKKTYPCKLDSIEFIGEDIAILSLRLPPTAKIQYLAGQYIDLIINGQRRSYSIANAPGGNGNIELHVRKVVNGVFSNIIFNELKLQQLLRIEGPQGTFFVREDNLPIVFLAGGTGFAPVKSMVEALINKNDQRQVHIYWGMPAGHNFYSDIANEWAIKHPNIHYVPVVSGDDSTWTGATGFVHQAVLEDIPDLSLFNVYACGSLAMITAARNDFINHGLAENKFFSDAFVPSK.

One can recognise a 2Fe-2S ferredoxin-type domain in the interval Ser2 to Leu93. Residues Cys37, Cys42, Cys45, and Cys75 each contribute to the [2Fe-2S] cluster site. Residues Lys98 to Arg197 enclose the FAD-binding FR-type domain.

As to quaternary structure, monomer.

It participates in nucleotide-sugar biosynthesis; CDP-ascarylose biosynthesis. Its pathway is bacterial outer membrane biogenesis; lipopolysaccharide biosynthesis. Its function is as follows. Participates in the conversion of CDP-6-deoxy-D-glycero-L-threo-4-hexulose to 3,6-dideoxy-D-glycero-D-glycero-4-hexulose together with CDP-6-deoxy-D-glycero-L-threo-4-hexulose-3-dehydrase (E1) in two consecutive steps. The detailed mechanism of E3 is not yet resolved. This Yersinia pestis protein is CDP-6-deoxy-L-threo-D-glycero-4-hexulose-3-dehydrase reductase (ascD).